The primary structure comprises 272 residues: 1,4-dihydroxy-6-naphtoate synthase (272 aa).

Substrate-binding positions include 55–57 and 107–108; these read KLS and TA. The active-site Proton acceptor is the H145.

The protein belongs to the MqnA/MqnD family. MqnD subfamily.

It catalyses the reaction cyclic dehypoxanthinylfutalosinate = 1,4-dihydroxy-6-naphthoate + dihydroxyacetone. It functions in the pathway quinol/quinone metabolism; menaquinone biosynthesis. Functionally, catalyzes the conversion of cyclic dehypoxanthine futalosine (cyclic DHFL) into 1,4-dihydroxy-6-naphthoate, a step in the biosynthesis of menaquinone (MK, vitamin K2). The chain is 1,4-dihydroxy-6-naphtoate synthase from Thermus thermophilus (strain ATCC 27634 / DSM 579 / HB8).